The chain runs to 421 residues: 5-hydroxytryptamine receptor 1A (421 aa).

Residues 1-38 lie on the Extracellular side of the membrane; it reads MDMFSLGQGNNTTTSLEPFGTGGNDTGLSNVTFSYQVI. 4 N-linked (GlcNAc...) asparagine glycosylation sites follow: Asn10, Asn11, Asn24, and Asn30. Residues 39-59 form a helical membrane-spanning segment; that stretch reads TSLLLGTLIFCAVLGNACVVA. Over 60–73 the chain is Cytoplasmic; sequence AIALERSLQNVANY. A helical transmembrane segment spans residues 74–98; the sequence is LIGSLAVTDLMVSVLVLPMAALYQV. Topologically, residues 99–107 are extracellular; sequence LNKWTLGQV. Residues 108–132 traverse the membrane as a helical segment; it reads TCDLFIALDVLCCTSSILHLCAIAL. Cys109 and Cys187 form a disulfide bridge. The serotonin site is built by Asp116 and Cys120. A DRY motif; important for ligand-induced conformation changes motif is present at residues 133-135; sequence DRY. At 133 to 152 the chain is on the cytoplasmic side; sequence DRYWAITDPIDYVNKRTPRR. Residues 153-174 traverse the membrane as a helical segment; that stretch reads AAALISLTWLIGFLISIPPMLG. Residues 175–193 are Extracellular-facing; it reads WRTPEDRSNPNECTISKDH. Residues 194–216 form a helical membrane-spanning segment; the sequence is GYTIYSTFGAFYIPLLLMLVLYG. The Cytoplasmic portion of the chain corresponds to 217 to 346; the sequence is RIFRAARFRI…LARERKTVKT (130 aa). The disordered stretch occupies residues 237–268; that stretch reads GAGTSFGTSSAPPPKKSLNGQPGSGDCRRSAE. The 1D-myo-inositol 4-phosphate site is built by Thr314, Lys345, Thr346, and Gly352. Residues 347–370 form a helical membrane-spanning segment; sequence LGIIMGTFILCWLPFFIVALVLPF. Residues 371–378 lie on the Extracellular side of the membrane; the sequence is CESSCHMP. The helical transmembrane segment at 379–403 threads the bilayer; it reads ELLGAIINWLGYSNSLLNPVIYAYF. An NPxxY motif; important for ligand-induced conformation changes and signaling motif is present at residues 396 to 400; sequence NPVIY. 1D-myo-inositol 4-phosphate-binding residues include Phe403, Asn404, and Lys405. The Cytoplasmic portion of the chain corresponds to 404-421; that stretch reads NKDFQNAFKKIIKCKFCR.

Belongs to the G-protein coupled receptor 1 family. 5-hydroxytryptamine receptor subfamily. HTR1A sub-subfamily. Heterodimer; heterodimerizes with GPER1. Interacts with YIF1B. Interacts with GPR39 and GALR1. As to expression, most abundantly expressed in midbrain, in dorsal raphe and hippocampus. Detected at lower levels in amygdala and brain cortex.

The protein resides in the cell membrane. It localises to the cell projection. The protein localises to the dendrite. Its activity is regulated as follows. G-protein coupled receptor activity is regulated by lipids: phosphatidylinositol 4-phosphate increases HTR1A-mediated activity. Plays a role in the regulation of dopamine and 5-hydroxytryptamine levels in the brain, and thereby affects neural activity, mood and behavior. Plays a role in the response to anxiogenic stimuli. G-protein coupled receptor for 5-hydroxytryptamine (serotonin). Also functions as a receptor for various drugs and psychoactive substances. Ligand binding causes a conformation change that triggers signaling via guanine nucleotide-binding proteins (G proteins) and modulates the activity of downstream effectors, such as adenylate cyclase. HTR1A is coupled to G(i)/G(o) G alpha proteins and mediates inhibitory neurotransmission: signaling inhibits adenylate cyclase activity and activates a phosphatidylinositol-calcium second messenger system that regulates the release of Ca(2+) ions from intracellular stores. Beta-arrestin family members regulate signaling by mediating both receptor desensitization and resensitization processes. This Mus musculus (Mouse) protein is 5-hydroxytryptamine receptor 1A (Htr1a).